A 666-amino-acid polypeptide reads, in one-letter code: Polyamine deacetylase HDAC10 (666 aa).

The segment at 1-323 (MGTALVYHED…VCMMVQTLLG (323 aa)) is histone deacetylase. Residue His135 is part of the active site.

This sequence belongs to the histone deacetylase family. HD type 2 subfamily. In terms of assembly, interacts with HDAC3. Interacts with HDAC2 and NCOR2/SMRT. Interacts with HSPA8/HSC70. Interacts with MSH2. In terms of tissue distribution, widely expressed.

The protein localises to the cytoplasm. Its subcellular location is the nucleus. The enzyme catalyses N(8)-acetylspermidine + H2O = spermidine + acetate. It catalyses the reaction N-acetylputrescine + H2O = putrescine + acetate. It carries out the reaction N-acetylcadaverine + H2O = cadaverine + acetate. The catalysed reaction is N(6)-acetyl-L-lysyl-[protein] + H2O = L-lysyl-[protein] + acetate. Polyamine deacetylase (PDAC), which acts preferentially on N(8)-acetylspermidine, and also on acetylcadaverine and acetylputrescine. Exhibits attenuated catalytic activity toward N(1),N(8)-diacetylspermidine and very low activity, if any, toward N(1)-acetylspermidine. Histone deacetylase activity has been observed in vitro. Has also been shown to be involved in MSH2 deacetylation. The physiological relevance of protein/histone deacetylase activity is unclear and could be very weak. May play a role in the promotion of late stages of autophagy, possibly autophagosome-lysosome fusion and/or lysosomal exocytosis in neuroblastoma cells. May play a role in homologous recombination. May promote DNA mismatch repair. The protein is Polyamine deacetylase HDAC10 (Hdac10) of Mus musculus (Mouse).